The chain runs to 1091 residues: ATP-citrate synthase (1091 aa).

Residues 4-265 enclose the ATP-grasp domain; the sequence is KAISEQTGKE…LDAKSGASLK (262 aa). 6 residues coordinate ATP: lysine 58, arginine 66, glycine 67, proline 109, valine 111, and glutamate 118. Tyrosine 131 is subject to Phosphotyrosine. Aspartate 216 contributes to the ATP binding site. The Mg(2+) site is built by aspartate 257, serine 260, and alanine 262. Position 263 is a phosphoserine (serine 263). Positions 309, 346, 348, 364, and 379 each coordinate citrate. Over residues 442 to 457 the composition is skewed to low complexity; it reads SGSTSTPAPSRTASFS. The interval 442–478 is disordered; the sequence is SGSTSTPAPSRTASFSESRADEVAPAKKAKPAMPQGK. Threonine 447 carries the post-translational modification Phosphothreonine. Serine 451 carries the phosphoserine modification. Serine 455 is subject to Phosphoserine; by PKA and PKB/AKT1 or PKB/AKT2 or BCKDK. Serine 459 bears the Phosphoserine mark. Residues lysine 530, lysine 536, and lysine 544 each carry the N6-acetyllysine; alternate modification. Glycyl lysine isopeptide (Lys-Gly) (interchain with G-Cter in ubiquitin); alternate cross-links involve residues lysine 530, lysine 536, and lysine 544. Phosphothreonine is present on threonine 629. A Phosphoserine modification is found at serine 653. At tyrosine 672 the chain carries Phosphotyrosine. Catalysis depends on histidine 750, which acts as the Tele-phosphohistidine intermediate. Position 769–779 (769–779) interacts with CoA; that stretch reads LKEAGVFVPRS. Serine 829 is modified (phosphoserine). 4 positions are modified to N6-acetyllysine: lysine 938, lysine 958, lysine 968, and lysine 1067. Position 1090 is a phosphoserine (serine 1090).

In the N-terminal section; belongs to the succinate/malate CoA ligase beta subunit family. This sequence in the C-terminal section; belongs to the succinate/malate CoA ligase alpha subunit family. In terms of assembly, homotetramer. Requires Mg(2+) as cofactor. Phosphorylated by PKA and GSK3 in a sequential manner; phosphorylation results in activation of its activity. Phosphorylation on Thr-447 and Ser-451 depends on the phosphorylation state of Ser-455. Phosphorylation on Ser-455 is decreased by prior phosphorylation on the other 2 residues. Phosphorylated at Ser-455 by BCKDK and dephosphorylated by protein phosphatase PPM1K. Post-translationally, ISGylated. In terms of processing, acetylated at Lys-530, Lys-536 and Lys-544 by KAT2B/PCAF. Acetylation is promoted by glucose and stabilizes the protein, probably by preventing ubiquitination at the same sites. Acetylation promotes de novo lipid synthesis. Deacetylated by SIRT2. Ubiquitinated at Lys-530, Lys-536 and Lys-544 by the BCR(KLHL25) E3 ubiquitin ligase complex and UBR4, leading to its degradation. Ubiquitination is probably inhibited by acetylation at same site. BCR(KLHL25)-mediated degradation of ACLY promotes fatty acid oxidation and is required for differentiation of inducible regulatory T (iTreg) cells.

The protein localises to the cytoplasm. It is found in the cytosol. It catalyses the reaction oxaloacetate + acetyl-CoA + ADP + phosphate = citrate + ATP + CoA. Its activity is regulated as follows. Phosphorylation results in activation of its activity. Glucose 6-phosphate, fructose 6-phosphate, fructose 2,6-bisphosphate, ribulose 5-phosphate, and fructose 1,6-bisphosphate also act as activators. Its function is as follows. Catalyzes the cleavage of citrate into oxaloacetate and acetyl-CoA, the latter serving as common substrate in multiple biochemical reactions in protein, carbohydrate and lipid metabolism. In Mus musculus (Mouse), this protein is ATP-citrate synthase (Acly).